The chain runs to 186 residues: uncharacterized protein (186 aa).

Positions 1–18 (MKKFFFAAALVVSGLLVG) are cleaved as a signal peptide. Cys-19 carries N-palmitoyl cysteine lipidation. The S-diacylglycerol cysteine moiety is linked to residue Cys-19.

The protein resides in the cell membrane. This is an uncharacterized protein from Salmonella typhimurium (strain LT2 / SGSC1412 / ATCC 700720).